Reading from the N-terminus, the 225-residue chain is Putative N-acetylmannosamine-6-phosphate 2-epimerase (225 aa).

The protein belongs to the NanE family.

The catalysed reaction is an N-acyl-D-glucosamine 6-phosphate = an N-acyl-D-mannosamine 6-phosphate. It participates in amino-sugar metabolism; N-acetylneuraminate degradation; D-fructose 6-phosphate from N-acetylneuraminate: step 3/5. Functionally, converts N-acetylmannosamine-6-phosphate (ManNAc-6-P) to N-acetylglucosamine-6-phosphate (GlcNAc-6-P). The protein is Putative N-acetylmannosamine-6-phosphate 2-epimerase of Vibrio vulnificus (strain CMCP6).